A 285-amino-acid polypeptide reads, in one-letter code: MSQQRPARKLPSLLVDPAEETVRRRCRDPINVEGLLPSKIRINLEDNVQYVSMRKALKVKRPRFDVSLVYLTRKFMDLVRSAPGGILDLNKVATKLGVRKRRVYDITNVLDGIDLVEKKSKNHIRWIGSDLSNFGAVPQQKKLQEELSDLSAMEDALDELIKDCAQQLFELTDDKENERLAYVTYQDIHSIQAFHEQIVIAVKAPAETRLDVPAPKEDSITVHIRSTKGPIDVYLCEVEQGSHSSNKTSDNVGTSSSKSKPLEHPQPEKEENPPQQSEEVLEVSN.

Residue Lys9 forms a Glycyl lysine isopeptide (Lys-Gly) (interchain with G-Cter in SUMO2) linkage. A DNA-binding region spans residues 50–129 (YVSMRKALKV…SKNHIRWIGS (80 aa)). Residues 95–129 (KLGVRKRRVYDITNVLDGIDLVEKKSKNHIRWIGS) carry the DEF box motif. The segment at 130–222 (DLSNFGAVPQ…PAPKEDSITV (93 aa)) is dimerization. The segment at 143–164 (LQEELSDLSAMEDALDELIKDC) is leucine-zipper. The interval 173-285 (DDKENERLAY…QSEEVLEVSN (113 aa)) is transcription repression. The interval 240–285 (QGSHSSNKTSDNVGTSSSKSKPLEHPQPEKEENPPQQSEEVLEVSN) is disordered. Polar residues predominate over residues 241–259 (GSHSSNKTSDNVGTSSSKS). Basic and acidic residues predominate over residues 260 to 272 (KPLEHPQPEKEEN).

It belongs to the E2F/DP family. As to quaternary structure, forms heterodimers with DP family members TFDP1 or TFDP2. Component of the DRTF1/E2F transcription factor complex. Part of the E2F6.com-1 complex in G0 phase composed of E2F6, MGA, MAX, TFDP1, CBX3, BAT8, EUHMTASE1, RING1, RNF2, MBLR, L3MBTL2 and YAF2. Component of some MLL1/MLL complex, at least composed of the core components KMT2A/MLL1, ASH2L, HCFC1/HCF1, WDR5 and RBBP5, as well as the facultative components BACC1, CHD8, E2F6, HSP70, INO80C, KANSL1, LAS1L, MAX, MCRS1, MGA, KAT8/MOF, PELP1, PHF20, PRP31, RING2, RUVB1/TIP49A, RUVB2/TIP49B, SENP3, TAF1, TAF4, TAF6, TAF7, TAF9 and TEX10.

It localises to the nucleus. Inhibitor of E2F-dependent transcription. Binds DNA cooperatively with DP proteins through the E2 recognition site, 5'-TTTC[CG]CGC-3'. Has a preference for the 5'-TTTCCCGC-3' E2F recognition site. E2F6 lacks the transcriptional activation and pocket protein binding domains. Appears to regulate a subset of E2F-dependent genes whose products are required for entry into the cell cycle but not for normal cell cycle progression. Represses expression of some meiosis-specific genes, including SLC25A31/ANT4. May silence expression via the recruitment of a chromatin remodeling complex containing histone H3-K9 methyltransferase activity. Overexpression delays the exit of cells from the S-phase. The polypeptide is Transcription factor E2F6 (Bos taurus (Bovine)).